We begin with the raw amino-acid sequence, 1703 residues long: Arf-GAP with Rho-GAP domain, ANK repeat and PH domain-containing protein 2 (1703 aa).

One can recognise an SAM domain in the interval 6 to 70 (EVNADIRDFL…LKQLQMIFSK (65 aa)). Y77 is modified (phosphotyrosine). 3 disordered regions span residues 84–132 (KNGS…LSEG), 191–232 (EEHT…NGTN), and 286–319 (PVPE…LTLK). Polar residues-rich tracts occupy residues 85–103 (NGST…STHT), 123–132 (MVTTSTLSEG), and 197–214 (GNLT…NTEC). Residues 222-232 (TSGTHSGNGTN) are compositionally biased toward low complexity. The span at 308–319 (NTTSAGKSLTLK) shows a compositional bias: polar residues. 2 PH domains span residues 480–572 (AKEK…SALK) and 585–677 (APEK…QSIA). The Arf-GAP domain occupies 674–809 (QSIAETLSDY…TLLASLTKEE (136 aa)). The segment at 698 to 721 (CADCKAPDPDWASINLCVVICKKC) adopts a C4-type zinc-finger fold. PH domains follow at residues 899 to 1001 (QTAA…KRFV) and 1012 to 1110 (DYDL…KAAG). In terms of domain architecture, Rho-GAP spans 1114 to 1295 (NALQDQQLCK…DLINNYVEIF (182 aa)). Positions 1324-1418 (GDLLIEVFVE…AYLVVKRFLT (95 aa)) constitute a Ras-associating domain. In terms of domain architecture, PH 5 spans 1428–1531 (KSIKEGILKL…WMASIFIAQH (104 aa)). The residue at position 1627 (S1627) is a Phosphoserine. 2 disordered regions span residues 1633 to 1670 (DTEA…DPKL) and 1684 to 1703 (RSRP…KEVK). Composition is skewed to basic and acidic residues over residues 1653 to 1670 (KKTE…DPKL) and 1688 to 1703 (LHKE…KEVK).

Its subcellular location is the cytoplasm. Its function is as follows. Phosphatidylinositol 3,4,5-trisphosphate-dependent GTPase-activating protein that modulates actin cytoskeleton remodeling by regulating ARF and RHO family members. Is activated by phosphatidylinositol 3,4,5-trisphosphate (PtdIns(3,4,5)P3) binding. Can be activated by phosphatidylinositol 3,4-bisphosphate (PtdIns(3,4,5)P2) binding, albeit with lower efficiency. The chain is Arf-GAP with Rho-GAP domain, ANK repeat and PH domain-containing protein 2 (Arap2) from Mus musculus (Mouse).